We begin with the raw amino-acid sequence, 104 residues long: MAAKIRRQDEVIVLAGKDQGKRGKVSQVLPTGKLIVEGINLVKKHQKPNPQLGVAGGIVEQEAPIQASNVAIFNSATGKADRVGFRFEDGKKVRFFKSNSELVK.

Belongs to the universal ribosomal protein uL24 family. As to quaternary structure, part of the 50S ribosomal subunit.

Its function is as follows. One of two assembly initiator proteins, it binds directly to the 5'-end of the 23S rRNA, where it nucleates assembly of the 50S subunit. One of the proteins that surrounds the polypeptide exit tunnel on the outside of the subunit. The sequence is that of Large ribosomal subunit protein uL24 from Shewanella pealeana (strain ATCC 700345 / ANG-SQ1).